Here is a 154-residue protein sequence, read N- to C-terminus: MATFVQKPAEVEKKWILIDAEGLVVGRLASLIANRLRGKHKATYTPHVDDGDNVIVINAEKAVLTGKKYTDKKYYWHTGYPGGIKERTARQIIEGRFPERVIEKAVERMVPRGPLGRRQMKNLRVYAGSNHPHEAQQPAVLDVAKLNSKNTRSA.

Belongs to the universal ribosomal protein uL13 family. As to quaternary structure, part of the 50S ribosomal subunit.

Its function is as follows. This protein is one of the early assembly proteins of the 50S ribosomal subunit, although it is not seen to bind rRNA by itself. It is important during the early stages of 50S assembly. The sequence is that of Large ribosomal subunit protein uL13 from Rhizobium meliloti (strain 1021) (Ensifer meliloti).